An 833-amino-acid chain; its full sequence is MSFYNHKEIEPKWQEFWAKNHTFKTGTDAEKPNFYALDMFPYPSGAGLHVGHPEGYTATDILSRYKRAQGYNVLHPMGWDAFGLPAEQYAMDTGNDPADFTAENIANFKRQINALGFSYDWDREVNTTDPNYYKWTQWIFTKLYEKGLAYEAEVPVNWVEELGTAIANEEVLPDGTSERGGYPVVRKPMRQWMLKITAYAERLLNDLEEVDWPESIKDMQRNWIGKSTGANVTFKIKDTDKDFTVFTTRPDTLFGATYAVLAPEHDLVDSITSAEQAEAVAEYKRQASLKSDLARTDLATDKTGVWTGAYAINPVNGKEIPIWIADYVLASYGTGAIMAVPAHDERDWEFAKQFGLDIIPVLEGGNVEEAPYTEDGAHINSDFLDGLNKEEAIAKMVAWLEENGVGQEKISYRLRDWLFSRQRYWGEPIPIIHWEDGTSTAVPENELPLVLPKTSDIKPSGTGESPLANLTDWLEVVREDGVKGRRETNTMPQWAGSSWYYLRYIDPHNDEKLADEDLLKAWLPVDIYIGGAEHAVLHLLYARFWHKFLYDLGVVPTKEPFQKLFNQGMILGTSYRDSRGALVATDKVEKRDGSFFHMETGEELEQAPAKMSKSLKNVVNPDDVVEQFGADTLRVYEMFMGPLDASIAWSEEGLEGSRKFLDRVYRLLTTKELVAENSGALDKVYNETVKTVTEHIEDLKFNTAIAQLMIFVNAANKEDKLYVDYAKGFVQLIAPFAPHLAEELWQGLANTGQSISYVAWPTYDESKLVESEVEIVVQIKGKVKARLTVAKDLAPAELEKVALADEKVQAEIAGQTVVKVISVPNKLVNIVVK.

The 'HIGH' region signature appears at 41–52; it reads PYPSGAGLHVGH. Residues 610–614 carry the 'KMSKS' region motif; sequence KMSKS. Lysine 613 contributes to the ATP binding site.

Belongs to the class-I aminoacyl-tRNA synthetase family.

Its subcellular location is the cytoplasm. It catalyses the reaction tRNA(Leu) + L-leucine + ATP = L-leucyl-tRNA(Leu) + AMP + diphosphate. In Streptococcus suis (strain 05ZYH33), this protein is Leucine--tRNA ligase.